A 214-amino-acid chain; its full sequence is Pyrrolidone-carboxylate peptidase (214 aa).

Active-site residues include E80, C143, and H166.

Belongs to the peptidase C15 family. In terms of assembly, homotetramer.

The protein localises to the cytoplasm. It carries out the reaction Release of an N-terminal pyroglutamyl group from a polypeptide, the second amino acid generally not being Pro.. Functionally, removes 5-oxoproline from various penultimate amino acid residues except L-proline. The chain is Pyrrolidone-carboxylate peptidase from Enterobacter sp. (strain 638).